The chain runs to 65 residues: Neurotoxin BmK-M3 (65 aa).

An LCN-type CS-alpha/beta domain is found at 2–64 (RDAYIAKPEN…VPIRVWGKCH (63 aa)). Cystine bridges form between cysteine 12–cysteine 63, cysteine 16–cysteine 36, cysteine 22–cysteine 46, and cysteine 26–cysteine 48.

This sequence belongs to the long (4 C-C) scorpion toxin superfamily. Sodium channel inhibitor family. Alpha subfamily. In terms of tissue distribution, expressed by the venom gland.

It is found in the secreted. In terms of biological role, binds to sodium channels (Nav) and inhibits the inactivation of the activated channels, thereby blocking neuronal transmission. This chain is Neurotoxin BmK-M3, found in Olivierus martensii (Manchurian scorpion).